The sequence spans 355 residues: Guanine nucleotide-binding protein G(i) subunit alpha (355 aa).

G2 carries N-myristoyl glycine lipidation. C3 carries the S-palmitoyl cysteine lipid modification. The region spanning 33–355 is the G-alpha domain; sequence REVKLLLLGA…KNNLKDCGLF (323 aa). Residues 36-49 are G1 motif; that stretch reads KLLLLGAGESGKST. Residues 41 to 48, 176 to 182, 201 to 205, 270 to 273, and A327 contribute to the GTP site; these read GAGESGKS, LRTRVKT, DVGGQ, and NKKD. The Mg(2+) site is built by S48 and T182. Residues 174 to 182 are G2 motif; the sequence is DVLRTRVKT. The tract at residues 197–206 is G3 motif; it reads FKLFDVGGQR. The G4 motif stretch occupies residues 266–273; sequence ILFLNKKD. Residues 325–330 form a G5 motif region; sequence TCATDT.

The protein belongs to the G-alpha family. G(i/o/t/z) subfamily. In terms of assembly, g proteins are composed of 3 units; alpha, beta and gamma. The alpha chain contains the guanine nucleotide binding site.

Guanine nucleotide-binding proteins (G proteins) are involved as modulators or transducers in various transmembrane signaling systems. In Homarus americanus (American lobster), this protein is Guanine nucleotide-binding protein G(i) subunit alpha.